The chain runs to 316 residues: Protein C4 (316 aa).

This sequence belongs to the poxviridae OPG031 protein family.

The protein localises to the host cytoplasm. Its subcellular location is the host nucleus. Functionally, plays a role in the inhibition of host NF-kappa-B activation. Mechanistically, blocks the subunit p65/RELA translocation into the host nucleus. This chain is Protein C4 (OPG031), found in Homo sapiens (Human).